Reading from the N-terminus, the 121-residue chain is Peptidyl-tRNA hydrolase (121 aa).

This sequence belongs to the PTH2 family.

The protein resides in the cytoplasm. It catalyses the reaction an N-acyl-L-alpha-aminoacyl-tRNA + H2O = an N-acyl-L-amino acid + a tRNA + H(+). Its function is as follows. The natural substrate for this enzyme may be peptidyl-tRNAs which drop off the ribosome during protein synthesis. The polypeptide is Peptidyl-tRNA hydrolase (Sulfurisphaera tokodaii (strain DSM 16993 / JCM 10545 / NBRC 100140 / 7) (Sulfolobus tokodaii)).